The following is a 345-amino-acid chain: Adenine deaminase (345 aa).

Zn(2+) contacts are provided by His20, His22, and His204. Glu207 acts as the Proton donor in catalysis. Residue Asp285 coordinates Zn(2+). Residue Asp286 coordinates substrate.

It belongs to the metallo-dependent hydrolases superfamily. Adenosine and AMP deaminases family. Adenine deaminase type 2 subfamily. Zn(2+) is required as a cofactor.

It carries out the reaction adenine + H2O + H(+) = hypoxanthine + NH4(+). Catalyzes the hydrolytic deamination of adenine to hypoxanthine. Plays an important role in the purine salvage pathway and in nitrogen catabolism. The sequence is that of Adenine deaminase from Ralstonia nicotianae (strain ATCC BAA-1114 / GMI1000) (Ralstonia solanacearum).